The primary structure comprises 1305 residues: Myosin-IIIb (1305 aa).

One can recognise a Protein kinase domain in the interval 15 to 281 (WEIIETIGKG…VTHLLDHPFI (267 aa)). ATP contacts are provided by residues 21-29 (IGKGTYGKV) and Lys-44. Asp-144 acts as the Proton acceptor in catalysis. Residues 331 to 1046 (CLEDDLVNLE…HVEQLNLLLR (716 aa)) form the Myosin motor domain. The segment at 927–949 (LMDLLSKMVVGQPHFIRCIKPND) is actin-binding. IQ domains lie at 1048 to 1077 (VMGR…KREK) and 1075 to 1104 (REKG…RRSE). Disordered stretches follow at residues 1093-1164 (RKLK…VTSG) and 1200-1233 (SPCE…MLSS).

It in the C-terminal section; belongs to the TRAFAC class myosin-kinesin ATPase superfamily. Myosin family. In the N-terminal section; belongs to the protein kinase superfamily. STE Ser/Thr protein kinase family. As to quaternary structure, interacts (via C-terminus) with ESPN. Interacts (via C-terminus) with ESPNL. In terms of tissue distribution, expressed in the cochlear hair cells (at protein level). Expressed in utricle hair bundles (at protein level).

The protein resides in the cytoplasm. The protein localises to the cytoskeleton. It is found in the cell projection. It localises to the stereocilium. The catalysed reaction is L-seryl-[protein] + ATP = O-phospho-L-seryl-[protein] + ADP + H(+). It carries out the reaction L-threonyl-[protein] + ATP = O-phospho-L-threonyl-[protein] + ADP + H(+). Its function is as follows. Probable actin-based motor with a protein kinase activity. Required for normal cochlear hair bundle development and hearing. Plays an important role in the early steps of cochlear hair bundle morphogenesis. Influences the number and lengths of stereocilia to be produced and limits the growth of microvilli within the forming auditory hair bundles thereby contributing to the architecture of the hair bundle, including its staircase pattern. Involved in the elongation of actin in stereocilia tips by transporting the actin regulatory factor ESPN to the plus ends of actin filaments. The sequence is that of Myosin-IIIb (Myo3b) from Mus musculus (Mouse).